The sequence spans 334 residues: Anthranilate phosphoribosyltransferase (334 aa).

5-phospho-alpha-D-ribose 1-diphosphate contacts are provided by residues Gly79, 82-83, Ser87, 89-92, 107-115, and Ser119; these read GD, NIST, and KAGNRSISS. Gly79 is a binding site for anthranilate. Ser91 serves as a coordination point for Mg(2+). Asn110 contacts anthranilate. Residue Arg165 participates in anthranilate binding. Mg(2+) is bound by residues Asp224 and Glu225.

This sequence belongs to the anthranilate phosphoribosyltransferase family. In terms of assembly, homodimer. Mg(2+) serves as cofactor.

It carries out the reaction N-(5-phospho-beta-D-ribosyl)anthranilate + diphosphate = 5-phospho-alpha-D-ribose 1-diphosphate + anthranilate. Its pathway is amino-acid biosynthesis; L-tryptophan biosynthesis; L-tryptophan from chorismate: step 2/5. Catalyzes the transfer of the phosphoribosyl group of 5-phosphorylribose-1-pyrophosphate (PRPP) to anthranilate to yield N-(5'-phosphoribosyl)-anthranilate (PRA). The chain is Anthranilate phosphoribosyltransferase from Streptococcus thermophilus (strain ATCC BAA-491 / LMD-9).